A 208-amino-acid chain; its full sequence is Ectodysplasin-A receptor-associated adapter protein (208 aa).

The span at 1–18 (MASPDDPLRSDHMAKEPV) shows a compositional bias: basic and acidic residues. The disordered stretch occupies residues 1–99 (MASPDDPLRS…KGSCSCPSCS (99 aa)). Residues 49 to 61 (TVNSNCPPNSDDQ) show a composition bias toward polar residues. One can recognise a Death domain in the interval 116-195 (DTIRIKLDPC…KILRRWVDEE (80 aa)).

Binds EDAR. Self-associates and binds TRAF1, TRAF2 and TRAF3.

It localises to the cytoplasm. Functionally, adapter protein that interacts with EDAR DEATH domain and couples the receptor to EDA signaling pathway during morphogenesis of ectodermal organs. Mediates the activation of NF-kappa-B. This is Ectodysplasin-A receptor-associated adapter protein (Edaradd) from Mus musculus (Mouse).